We begin with the raw amino-acid sequence, 978 residues long: Sensor histidine kinase TodS (978 aa).

The PAS 1 domain maps to 32-103 (CEEHARIIFD…TQKRLVETAS (72 aa)). The PAC 1 domain maps to 108–162 (VRCDVEILGKSGGREVIAVDFSLLPICNEEGSIVYLLAEGRNITDKKKAEAMLAL). The Histidine kinase 1 domain maps to 187–405 (KVSHELRTPL…LFQVKLPLNA (219 aa)). Histidine 190 is modified (phosphohistidine; by autocatalysis). The region spanning 452 to 567 (RVLIVEDNPD…ELRARVSNLV (116 aa)) is the Response regulatory domain. Position 500 is a 4-aspartylphosphate (aspartate 500). The PAS 2 domain maps to 611 to 681 (SEARWKAVYE…QRLANLLQGG (71 aa)). A PAC 2 domain is found at 685–737 (YSVERSYLCKNGSTIWANASVSLMPQRVGESPVILQIIDDITEKKQAQENLNQ). The region spanning 757 to 974 (YIAHEINQPL…CFLVSIPARQ (218 aa)) is the Histidine kinase 2 domain. Histidine 760 is modified (phosphohistidine).

Autophosphorylated. Activation requires a sequential transfer of a phosphate group from a His in the primary transmitter domain, to an Asp in the receiver domain and to a His in the secondary transmitter domain.

The protein localises to the cytoplasm. It carries out the reaction ATP + protein L-histidine = ADP + protein N-phospho-L-histidine.. With respect to regulation, activity is regulated by agonists and antagonists. Binding of agonists such as toluene or benzene to TodS stimulates autophosphorylation at His-190. Activity is inhibited by antagonists such as o-xylene, o-chlorotoluene and trimethylbenzene isomers, which bind to TodS but do not stimulate autophosphorylation. Agonists and antagonists bind to the same PAS domain. In terms of biological role, member of the two-component regulatory system TodS/TodT involved in the regulation of toluene degradation. Phosphorylates TodT via a four-step phosphorelay in response to toluene. Can also be induced by benzene and ethylbenzene. This chain is Sensor histidine kinase TodS (todS), found in Pseudomonas putida (strain DOT-T1E).